Consider the following 418-residue polypeptide: Histidine--tRNA ligase (418 aa).

This sequence belongs to the class-II aminoacyl-tRNA synthetase family.

The protein resides in the cytoplasm. The enzyme catalyses tRNA(His) + L-histidine + ATP = L-histidyl-tRNA(His) + AMP + diphosphate + H(+). The sequence is that of Histidine--tRNA ligase from Methanococcus maripaludis (strain C7 / ATCC BAA-1331).